A 92-amino-acid polypeptide reads, in one-letter code: UPF0213 protein MGAS9429_Spy1198 (92 aa).

One can recognise a GIY-YIG domain in the interval 4 to 80; the sequence is KKAYMYVLEC…KRKTRSQKLA (77 aa).

The protein belongs to the UPF0213 family.

The chain is UPF0213 protein MGAS9429_Spy1198 from Streptococcus pyogenes serotype M12 (strain MGAS9429).